The following is a 280-amino-acid chain: Truncated lectin 2 (280 aa).

The N-terminal stretch at 1 to 26 (MSSSNFSCILSISLTFFILLLNKVNS) is a signal peptide. Mn(2+) contacts are provided by Glu-148 and Asp-150. The Ca(2+) site is built by Asp-150, Phe-152, Asn-154, and Asp-158. Position 158 (Asp-158) interacts with Mn(2+). An N-linked (GlcNAc...) asparagine glycan is attached at Asn-163. Residue His-170 participates in Mn(2+) binding. Asn-272 carries N-linked (GlcNAc...) asparagine glycosylation.

The protein belongs to the leguminous lectin family.

This is Truncated lectin 2 (LEC2) from Medicago truncatula (Barrel medic).